Consider the following 626-residue polypeptide: Phosphomethylpyrimidine synthase (626 aa).

The tract at residues 1 to 22 (MTKQEKAINLSESAQVDQQSVQ) is disordered. The segment covering 10 to 22 (LSESAQVDQQSVQ) has biased composition (polar residues). Substrate is bound by residues Asn-232, Met-261, Tyr-290, His-326, 346-348 (SRG), 387-390 (DGLR), and Glu-426. His-430 contacts Zn(2+). Residue Tyr-453 participates in substrate binding. Position 494 (His-494) interacts with Zn(2+). [4Fe-4S] cluster-binding residues include Cys-574, Cys-577, and Cys-582.

This sequence belongs to the ThiC family. As to quaternary structure, homodimer. It depends on [4Fe-4S] cluster as a cofactor.

It catalyses the reaction 5-amino-1-(5-phospho-beta-D-ribosyl)imidazole + S-adenosyl-L-methionine = 4-amino-2-methyl-5-(phosphooxymethyl)pyrimidine + CO + 5'-deoxyadenosine + formate + L-methionine + 3 H(+). It functions in the pathway cofactor biosynthesis; thiamine diphosphate biosynthesis. In terms of biological role, catalyzes the synthesis of the hydroxymethylpyrimidine phosphate (HMP-P) moiety of thiamine from aminoimidazole ribotide (AIR) in a radical S-adenosyl-L-methionine (SAM)-dependent reaction. The chain is Phosphomethylpyrimidine synthase from Pseudomonas putida (strain ATCC 700007 / DSM 6899 / JCM 31910 / BCRC 17059 / LMG 24140 / F1).